Reading from the N-terminus, the 293-residue chain is Probable porphobilinogen deaminase (293 aa).

Cys-233 is subject to S-(dipyrrolylmethanemethyl)cysteine.

This sequence belongs to the HMBS family. Dipyrromethane is required as a cofactor.

It carries out the reaction 4 porphobilinogen + H2O = hydroxymethylbilane + 4 NH4(+). It participates in porphyrin-containing compound metabolism; protoporphyrin-IX biosynthesis; coproporphyrinogen-III from 5-aminolevulinate: step 2/4. Its function is as follows. Tetrapolymerization of the monopyrrole PBG into the hydroxymethylbilane pre-uroporphyrinogen in several discrete steps. The sequence is that of Probable porphobilinogen deaminase from Saccharolobus islandicus (strain Y.G.57.14 / Yellowstone #1) (Sulfolobus islandicus).